The sequence spans 347 residues: NADH-ubiquinone oxidoreductase chain 2 (347 aa).

Transmembrane regions (helical) follow at residues 1-21 (MNPL…AIVA), 25-45 (HWLM…PILM), 59-79 (YFLT…MNLV), 111-131 (FHFW…LILL), 149-169 (INLD…GWGG), 178-198 (IMAY…AYNP), 201-221 (TLLN…MFML), 237-257 (MPLL…LPPL), 276-296 (VILP…YMRL), and 326-346 (LSPL…LALL).

This sequence belongs to the complex I subunit 2 family. As to quaternary structure, core subunit of respiratory chain NADH dehydrogenase (Complex I) which is composed of 45 different subunits. Interacts with TMEM242.

It localises to the mitochondrion inner membrane. It catalyses the reaction a ubiquinone + NADH + 5 H(+)(in) = a ubiquinol + NAD(+) + 4 H(+)(out). Functionally, core subunit of the mitochondrial membrane respiratory chain NADH dehydrogenase (Complex I) which catalyzes electron transfer from NADH through the respiratory chain, using ubiquinone as an electron acceptor. Essential for the catalytic activity and assembly of complex I. The chain is NADH-ubiquinone oxidoreductase chain 2 from Pteropus pumilus (Little golden-mantled flying fox).